The sequence spans 427 residues: Serine--tRNA ligase (427 aa).

236-238 contacts L-serine; sequence TAE. 267 to 269 is a binding site for ATP; that stretch reads RSE. Glu290 lines the L-serine pocket. ATP is bound at residue 354 to 357; the sequence is EISS. Ser388 contacts L-serine.

It belongs to the class-II aminoacyl-tRNA synthetase family. Type-1 seryl-tRNA synthetase subfamily. In terms of assembly, homodimer. The tRNA molecule binds across the dimer.

The protein localises to the cytoplasm. It carries out the reaction tRNA(Ser) + L-serine + ATP = L-seryl-tRNA(Ser) + AMP + diphosphate + H(+). The enzyme catalyses tRNA(Sec) + L-serine + ATP = L-seryl-tRNA(Sec) + AMP + diphosphate + H(+). The protein operates within aminoacyl-tRNA biosynthesis; selenocysteinyl-tRNA(Sec) biosynthesis; L-seryl-tRNA(Sec) from L-serine and tRNA(Sec): step 1/1. In terms of biological role, catalyzes the attachment of serine to tRNA(Ser). Is also able to aminoacylate tRNA(Sec) with serine, to form the misacylated tRNA L-seryl-tRNA(Sec), which will be further converted into selenocysteinyl-tRNA(Sec). The protein is Serine--tRNA ligase of Psychrobacter arcticus (strain DSM 17307 / VKM B-2377 / 273-4).